A 329-amino-acid chain; its full sequence is Glucokinase (329 aa).

13-18 (GDIGGT) contributes to the ATP binding site.

This sequence belongs to the bacterial glucokinase family.

It localises to the cytoplasm. It carries out the reaction D-glucose + ATP = D-glucose 6-phosphate + ADP + H(+). This chain is Glucokinase, found in Caulobacter sp. (strain K31).